A 358-amino-acid chain; its full sequence is Peptide chain release factor 1 (358 aa).

Gln-235 is subject to N5-methylglutamine.

Belongs to the prokaryotic/mitochondrial release factor family. Methylated by PrmC. Methylation increases the termination efficiency of RF1.

The protein localises to the cytoplasm. Functionally, peptide chain release factor 1 directs the termination of translation in response to the peptide chain termination codons UAG and UAA. This is Peptide chain release factor 1 from Neisseria meningitidis serogroup B (strain ATCC BAA-335 / MC58).